Consider the following 663-residue polypeptide: Probable receptor-like protein kinase At1g49730 (663 aa).

A signal peptide spans 1-25 (MVVNSQAFLLALIALLATQLPSLMA). Topologically, residues 26-254 (ADCPLDFSGS…TNPYHLTMVP (229 aa)) are extracellular. N-linked (GlcNAc...) asparagine glycans are attached at residues N36, N46, N70, N101, and N171. The segment at 213–243 (SFSPVASPEPSPSTVGGISPSNSDSQMTTSR) is disordered. Over residues 224–243 (PSTVGGISPSNSDSQMTTSR) the composition is skewed to polar residues. The chain crosses the membrane as a helical span at residues 255–275 (TIGIVVTAVALTMLVVLVILI). Residues 276–663 (RRKNRELDES…PHSPINGFSF (388 aa)) lie on the Cytoplasmic side of the membrane. A Protein kinase domain is found at 327 to 609 (NDFNTVIGQG…ESCDPVHSAF (283 aa)). Residues 333 to 341 (IGQGGFGTV) and K355 contribute to the ATP site. Catalysis depends on D451, which acts as the Proton acceptor. Residues 631 to 663 (RGDSRIFGPSSSTTSRSHYSRSLPHSPINGFSF) are disordered. The span at 640–652 (SSSTTSRSHYSRS) shows a compositional bias: low complexity.

This sequence belongs to the protein kinase superfamily. Ser/Thr protein kinase family.

Its subcellular location is the cell membrane. The catalysed reaction is L-seryl-[protein] + ATP = O-phospho-L-seryl-[protein] + ADP + H(+). It carries out the reaction L-threonyl-[protein] + ATP = O-phospho-L-threonyl-[protein] + ADP + H(+). This Arabidopsis thaliana (Mouse-ear cress) protein is Probable receptor-like protein kinase At1g49730.